Here is a 56-residue protein sequence, read N- to C-terminus: Small ribosomal subunit protein bS21 (56 aa).

The protein belongs to the bacterial ribosomal protein bS21 family.

This is Small ribosomal subunit protein bS21 from Dictyoglomus thermophilum (strain ATCC 35947 / DSM 3960 / H-6-12).